The chain runs to 1068 residues: Leucine zipper protein 1 (1068 aa).

Ala-2 is modified (N-acetylalanine). Residues 11 to 354 adopt a coiled-coil conformation; it reads ASNRHLRFKL…KLQVRKQKEL (344 aa). 3 disordered regions span residues 251 to 292, 375 to 402, and 432 to 558; these read LSSK…VKDL, TKLKGHGSEASVSKHTSRELSPQHKRER, and AAKA…QAVE. Over residues 254 to 292 the composition is skewed to basic and acidic residues; it reads KESKRKGSLDYLKQVENETRDKSENEKNRNQEDNKVKDL. 8 positions are modified to phosphoserine: Ser-256, Ser-261, Ser-395, Ser-513, Ser-571, Ser-575, Ser-612, and Ser-660. The span at 510–519 shows a compositional bias: polar residues; it reads RTFSDSTHVS. The tract at residues 677-700 is disordered; sequence TTITPEPEPKPQPNSREKVKSRGG. Thr-680 carries the phosphothreonine modification. Residues Ser-691 and Ser-746 each carry the phosphoserine modification. Positions 782-829 are disordered; sequence QKSTSKSVTSKVTSSITIYPSDSSGPRAVPSEAPRERHTSTSNIQVGP. Over residues 785–796 the composition is skewed to low complexity; it reads TSKSVTSKVTSS. The tract at residues 834 to 884 is required for interaction with FLNA; sequence AISNHVSSPLELSIHKHDITLQLTEAERVGDGSPKNRAEMVVSRSSILIKP. Ser-906 carries the post-translational modification Phosphoserine. The disordered stretch occupies residues 924 to 945; sequence RDLKCSEDPPTGIGRNMEATNA. Thr-952 carries the post-translational modification Phosphothreonine. Disordered regions lie at residues 959–995 and 1033–1068; these read QPRSQPSEQGARRVGNSGDAPELSPRRTQSSLTASEV and NPLEHSELPGKQGLPEPEPVWTEERLHPAKPYAEED. Positions 984–994 are enriched in polar residues; it reads RRTQSSLTASE. At Ser-988 the chain carries Phosphoserine.

In terms of assembly, component of the CERF-1 ISWI chromatin remodeling complex (also called the CECR2-containing remodeling factor (CERF) complex) at least composed of CECR2 and SMARCA1. Component of the CERF-5 ISWI chromatin remodeling complex at least composed of CECR2 and SMARCA5/SNF2H. LUZP1 is detected as part of the CERF-1 and CERF-5 complexes in embryonic stem (ES) cells where it is involved in complex stabilization but is not detected in the complexes in the testis. Interacts (via C-terminus) with LIMA1/EPLIN; both proteins restrict ciliation and may work together to regulate this process. Interacts with myosin light chain MYL9; the interaction results in inhibition of phosphorylation of MYL9 by DAPK3. Interacts with DAPK3; the interaction is likely to occur throughout the cell cycle and reduces the LUZP1-mediated suppression of MYL9 phosphorylation. Interacts with the chromosomal passenger complex (CPC); CPC kinase activity is required for localization of LUZP1 to the centromere. As to expression, predominantly expressed in the brain (at protein level).

The protein localises to the cytoplasm. It localises to the cytoskeleton. Its subcellular location is the microtubule organizing center. It is found in the centrosome. The protein resides in the cilium basal body. The protein localises to the midbody. It localises to the chromosome. Its subcellular location is the centromere. It is found in the spindle. The protein resides in the stress fiber. The protein localises to the nucleus. It localises to the cell projection. Its subcellular location is the dendrite. It is found in the perikaryon. The protein resides in the cell junction. The protein localises to the tight junction. In terms of biological role, F-actin cross-linking protein. Stabilizes actin and acts as a negative regulator of primary cilium formation. Positively regulates the phosphorylation of both myosin II and protein phosphatase 1 regulatory subunit PPP1R12A/MYPT1 and promotes the assembly of myosin II stacks within actin stress fibers. Inhibits the phosphorylation of myosin light chain MYL9 by DAPK3 and suppresses the constriction velocity of the contractile ring during cytokinesis. Binds to microtubules and promotes epithelial cell apical constriction by up-regulating levels of diphosphorylated myosin light chain (MLC) through microtubule-dependent inhibition of MLC dephosphorylation by myosin phosphatase. Involved in regulation of cell migration, nuclear size and centriole number, probably through regulation of the actin cytoskeleton. Component of the CERF-1 and CERF-5 chromatin remodeling complexes in embryonic stem cells where it acts to stabilize the complexes. Plays a role in embryonic brain and cardiovascular development. The polypeptide is Leucine zipper protein 1 (Luzp1) (Mus musculus (Mouse)).